Here is a 1336-residue protein sequence, read N- to C-terminus: DNA-directed RNA polymerase subunit beta' (1336 aa).

Positions 60, 62, 75, and 78 each coordinate Zn(2+). Mg(2+) contacts are provided by aspartate 535, aspartate 537, and aspartate 539. Residues cysteine 902, cysteine 984, cysteine 991, and cysteine 994 each contribute to the Zn(2+) site.

The protein belongs to the RNA polymerase beta' chain family. The RNAP catalytic core consists of 2 alpha, 1 beta, 1 beta' and 1 omega subunit. When a sigma factor is associated with the core the holoenzyme is formed, which can initiate transcription. The cofactor is Mg(2+). It depends on Zn(2+) as a cofactor.

The catalysed reaction is RNA(n) + a ribonucleoside 5'-triphosphate = RNA(n+1) + diphosphate. Functionally, DNA-dependent RNA polymerase catalyzes the transcription of DNA into RNA using the four ribonucleoside triphosphates as substrates. In Corynebacterium diphtheriae (strain ATCC 700971 / NCTC 13129 / Biotype gravis), this protein is DNA-directed RNA polymerase subunit beta'.